Reading from the N-terminus, the 677-residue chain is mRNA export factor Gle1 (677 aa).

The segment covering Glu-34 to Pro-48 has biased composition (basic and acidic residues). Disordered regions lie at residues Glu-34 to Ile-65, Lys-113 to Gln-136, and Glu-294 to Thr-366. Over residues Glu-49–Glu-60 the composition is skewed to pro residues. Coiled-coil stretches lie at residues Glu-122–His-179 and Gln-280–Val-346. Basic and acidic residues predominate over residues Glu-294–Lys-340.

Belongs to the GLE1 family. May associate with the NPC.

The protein localises to the cytoplasm. It localises to the nucleus. It is found in the nuclear pore complex. Functionally, required for the export of mRNAs containing poly(A) tails from the nucleus into the cytoplasm. May be involved in the terminal step of the mRNA transport through the nuclear pore complex (NPC). This is mRNA export factor Gle1 from Drosophila melanogaster (Fruit fly).